The primary structure comprises 115 residues: MTLDPDIAVRLKRNAEGLFTAVVQERSSGDVLMVAWMDDQALARTLETREANYYSRSRAEQWIKGSTSGNTQHVHSVRLDCDGDTVLLTVDQVGGACHTGAHSCFDSAMLLAPQD.

Mg(2+) is bound at residue D80. Zn(2+) is bound at residue C81. Positions 82 and 84 each coordinate Mg(2+). Zn(2+)-binding residues include C97 and C104.

This sequence belongs to the PRA-CH family. As to quaternary structure, homodimer. The cofactor is Mg(2+). It depends on Zn(2+) as a cofactor.

It localises to the cytoplasm. It catalyses the reaction 1-(5-phospho-beta-D-ribosyl)-5'-AMP + H2O = 1-(5-phospho-beta-D-ribosyl)-5-[(5-phospho-beta-D-ribosylamino)methylideneamino]imidazole-4-carboxamide. Its pathway is amino-acid biosynthesis; L-histidine biosynthesis; L-histidine from 5-phospho-alpha-D-ribose 1-diphosphate: step 3/9. Its function is as follows. Catalyzes the hydrolysis of the adenine ring of phosphoribosyl-AMP. The chain is Phosphoribosyl-AMP cyclohydrolase from Mycobacterium leprae (strain Br4923).